Here is a 361-residue protein sequence, read N- to C-terminus: RNA 3'-terminal phosphate cyclase (361 aa).

ATP-binding residues include Q105, P132, Y295, D298, Q299, and H321. H321 acts as the Tele-AMP-histidine intermediate in catalysis.

It belongs to the RNA 3'-terminal cyclase family. Type 1 subfamily.

It is found in the nucleus. Its subcellular location is the nucleoplasm. The catalysed reaction is a 3'-end 3'-phospho-ribonucleotide-RNA + ATP = a 3'-end 2',3'-cyclophospho-ribonucleotide-RNA + AMP + diphosphate. Functionally, catalyzes the conversion of 3'-phosphate to a 2',3'-cyclic phosphodiester at the end of RNA. The mechanism of action of the enzyme occurs in 3 steps: (A) adenylation of the enzyme by ATP; (B) transfer of adenylate to an RNA-N3'P to produce RNA-N3'PP5'A; (C) and attack of the adjacent 2'-hydroxyl on the 3'-phosphorus in the diester linkage to produce the cyclic end product. Likely functions in some aspects of cellular RNA processing. Function plays an important role in a RNA repair and splicing pathway which controls axon regeneration in response to peripheral (PNS) and central nervous system (CNS) injury. In response to axotomy, negatively regulates splicing of Xbp1 which in turn activates downstream effectors which inhibit axon regeneration, including down-regulating the microtubule regulators ringer and futsch. The polypeptide is RNA 3'-terminal phosphate cyclase (Drosophila melanogaster (Fruit fly)).